The chain runs to 562 residues: Lamassu protein LmuB (562 aa).

In terms of biological role, component of antiviral defense system Lamassu type I, composed of LmuA and LmuB. Expression of Lamassu type I in B.subtilis (strain BEST7003) confers resistance to phages phi3T, SpBeta and SPR. May be an ATPase. The chain is Lamassu protein LmuB from Bacillus sp. (strain NCIM 5461 / CCTCC AB 2011126 / NIO-1130).